The sequence spans 248 residues: MAVNDVNVFYGAKQAIKNVGLDIVAREVTAFIGPSGCGKSTFLRCLNRMNDTIDICKVTGDIRLDGEDVYDRHIDVVELRARVGMVFQKPNPFPKSIYENIAYGPRIHGIARGKSELDEIVQSSLERAGLWEEVKDRLESPGTGLSGGQQQRVCIARAIAVSPEVILMDEPCSALDPIATAKIEELIDELRSNYTIVIVTHSMQQAARVSQRTAFFHLGRLIECGDTETIFTNPQHNLTQGYITGRFG.

The ABC transporter domain maps to 1–243 (MAVNDVNVFY…PQHNLTQGYI (243 aa)). 33–40 (GPSGCGKS) contacts ATP.

It belongs to the ABC transporter superfamily. Phosphate importer (TC 3.A.1.7) family. As to quaternary structure, the complex is composed of two ATP-binding proteins (PstB), two transmembrane proteins (PstC and PstA) and a solute-binding protein (PstS).

Its subcellular location is the cell inner membrane. The catalysed reaction is phosphate(out) + ATP + H2O = ADP + 2 phosphate(in) + H(+). In terms of biological role, part of the ABC transporter complex PstSACB involved in phosphate import. Responsible for energy coupling to the transport system. This is Phosphate import ATP-binding protein PstB from Rhodospirillum rubrum (strain ATCC 11170 / ATH 1.1.1 / DSM 467 / LMG 4362 / NCIMB 8255 / S1).